The following is a 204-amino-acid chain: Holliday junction branch migration complex subunit RuvA (204 aa).

Residues 1–64 form a domain I region; it reads MIGHLTGRLV…EDAHLLFGFS (64 aa). Positions 65-143 are domain II; sequence QKTDRTLFRE…GIQQEDFFIE (79 aa). Positions 144 to 155 are flexible linker; it reads SQHLKQPEHALN. Residues 156 to 204 form a domain III region; the sequence is EQDIPASEAISALIALGYKAAEAEKLVKKISKPALSSEQLIREALKAAL.

The protein belongs to the RuvA family. As to quaternary structure, homotetramer. Forms an RuvA(8)-RuvB(12)-Holliday junction (HJ) complex. HJ DNA is sandwiched between 2 RuvA tetramers; dsDNA enters through RuvA and exits via RuvB. An RuvB hexamer assembles on each DNA strand where it exits the tetramer. Each RuvB hexamer is contacted by two RuvA subunits (via domain III) on 2 adjacent RuvB subunits; this complex drives branch migration. In the full resolvosome a probable DNA-RuvA(4)-RuvB(12)-RuvC(2) complex forms which resolves the HJ.

It is found in the cytoplasm. Its function is as follows. The RuvA-RuvB-RuvC complex processes Holliday junction (HJ) DNA during genetic recombination and DNA repair, while the RuvA-RuvB complex plays an important role in the rescue of blocked DNA replication forks via replication fork reversal (RFR). RuvA specifically binds to HJ cruciform DNA, conferring on it an open structure. The RuvB hexamer acts as an ATP-dependent pump, pulling dsDNA into and through the RuvAB complex. HJ branch migration allows RuvC to scan DNA until it finds its consensus sequence, where it cleaves and resolves the cruciform DNA. In Pasteurella multocida (strain Pm70), this protein is Holliday junction branch migration complex subunit RuvA.